The sequence spans 1014 residues: SUMO-specific isopeptidase USPL1 (1014 aa).

2 disordered regions span residues 137 to 158 (TFTDQQSAPAETISLDKTEEQP) and 275 to 318 (EEKP…VSDE). The span at 275–289 (EEKPVSLVHTEDQHL) shows a compositional bias: basic and acidic residues. The USP domain maps to 355 to 636 (LFWKNEENMC…EFHILFWETD (282 aa)). The active-site Nucleophile is C364. Positions 364–631 (CWLDAMLVML…PFPSSEFHIL (268 aa)) are SUMO-binding. H592 serves as the catalytic Proton acceptor. Disordered stretches follow at residues 794–823 (HPSFQSTPIRPPPPLPPAPKPKPSLQYDKH) and 844–867 (NSQPKQISLPGGLNPSVKKTAGQE). Residues 802-815 (IRPPPPLPPAPKPK) are compositionally biased toward pro residues.

The protein belongs to the peptidase C19 family.

It localises to the nucleus. Its subcellular location is the cajal body. In terms of biological role, SUMO-specific isopeptidase involved in protein desumoylation. Specifically binds SUMO proteins with a higher affinity for sumo2 and sumo3 which it cleaves more efficiently. Also able to process full-length SUMO proteins to their mature forms. Plays a key role in RNA polymerase-II-mediated snRNA transcription in the Cajal bodies. Is a component of complexes that can bind to U snRNA genes. The polypeptide is SUMO-specific isopeptidase USPL1 (uspl1) (Danio rerio (Zebrafish)).